We begin with the raw amino-acid sequence, 286 residues long: Shikimate dehydrogenase (NADP(+)) (286 aa).

Shikimate is bound by residues Ser-20–Ser-22 and Ser-67. The Proton acceptor role is filled by Lys-71. Residues Asn-92 and Asp-107 each coordinate shikimate. NADP(+) contacts are provided by residues Gly-131 to Ala-135 and Ala-230. Residue Tyr-232 participates in shikimate binding. NADP(+) is bound at residue Gly-253.

It belongs to the shikimate dehydrogenase family. In terms of assembly, homodimer.

The catalysed reaction is shikimate + NADP(+) = 3-dehydroshikimate + NADPH + H(+). It participates in metabolic intermediate biosynthesis; chorismate biosynthesis; chorismate from D-erythrose 4-phosphate and phosphoenolpyruvate: step 4/7. In terms of biological role, involved in the biosynthesis of the chorismate, which leads to the biosynthesis of aromatic amino acids. Catalyzes the reversible NADPH linked reduction of 3-dehydroshikimate (DHSA) to yield shikimate (SA). The chain is Shikimate dehydrogenase (NADP(+)) from Lactococcus lactis subsp. lactis (strain IL1403) (Streptococcus lactis).